Reading from the N-terminus, the 165-residue chain is Fimbrial protein (165 aa).

An N-terminal signal peptide occupies residues 1-21 (MRKSASAVAVLALIACGSAHA).

It is found in the fimbrium. Functionally, structural subunit of the sef14 fimbriae. In Salmonella enteritidis, this protein is Fimbrial protein (sefA).